The chain runs to 365 residues: Tetratricopeptide repeat protein 19, mitochondrial (365 aa).

Residues Met-1–Gly-52 constitute a mitochondrion transit peptide. TPR repeat units follow at residues Thr-127–Gly-160, Ala-220–Ile-260, Ile-269–Ile-302, and His-308–Lys-341.

This sequence belongs to the TTC19 family. In terms of assembly, binds to the mature mitochondrial complex III dimer, after the incorporation of the Rieske protein UQCRFS1. Interacts with UQCRC1 and UQCRFS1. Interacts with ZFYVE26 and CHMP4B. In terms of processing, proteolytically cleaved by PARL.

It localises to the mitochondrion inner membrane. In terms of biological role, required for the preservation of the structural and functional integrity of mitochondrial respiratory complex III by allowing the physiological turnover of the Rieske protein UQCRFS1. Involved in the clearance of UQCRFS1 N-terminal fragments, which are produced upon incorporation into the complex III and whose presence is detrimental for its catalytic activity. In Mus musculus (Mouse), this protein is Tetratricopeptide repeat protein 19, mitochondrial (Ttc19).